The chain runs to 303 residues: Putative ring-cleaving dioxygenase MhqE (303 aa).

VOC domains are found at residues 5–129 (GLHH…IMED) and 150–266 (GMKG…IATD). Fe cation-binding residues include histidine 8, histidine 215, and glutamate 262.

It belongs to the extradiol ring-cleavage dioxygenase family. The cofactor is Fe(2+).

The protein resides in the cytoplasm. Its function is as follows. Putative ring-cleavage dioxygenase that may contribute to the degradation of aromatic compounds. In Bacillus subtilis (strain 168), this protein is Putative ring-cleaving dioxygenase MhqE (mhqE).